The sequence spans 785 residues: E3 UFM1-protein ligase 1 homolog (785 aa).

The disordered stretch occupies residues 405–483 (ASFQDQDDDG…GGGGGNKKTV (79 aa)).

The protein belongs to the UFL1 family.

In terms of biological role, E3 UFM1-protein ligase that mediates ufmylation of target proteins. The polypeptide is E3 UFM1-protein ligase 1 homolog (Drosophila pseudoobscura pseudoobscura (Fruit fly)).